A 162-amino-acid chain; its full sequence is MGLSSLPGPSEGMLCVILVNTALSISIVKGIVRSFLGIVGISLSPSSSSPSSVTVSSENSSTSESFDFRVCQPESYLEEFRNRTPTLRFESLCRCKKQADNECSVCLSKFQGDSEINKLKCGHLFHKTCLEKWIDYWNITCPLCRTPLVVVPEDHQLSSNVW.

Residues 12 to 28 (GMLCVILVNTALSISIV) traverse the membrane as a helical segment. The RING-type; atypical zinc-finger motif lies at 103 to 145 (CSVCLSKFQGDSEINKLKCGHLFHKTCLEKWIDYWNITCPLCR).

As to quaternary structure, interacts with UBC8 and TULP9. As to expression, ubiquitous. Higher expression in actively growing tissues.

It localises to the membrane. It carries out the reaction S-ubiquitinyl-[E2 ubiquitin-conjugating enzyme]-L-cysteine + [acceptor protein]-L-lysine = [E2 ubiquitin-conjugating enzyme]-L-cysteine + N(6)-ubiquitinyl-[acceptor protein]-L-lysine.. Its pathway is protein modification; protein ubiquitination. In terms of biological role, function on abscisic acid homeostasis at post-translational level, probably through ubiquitin/proteasome-dependent substrate-specific degradation. The protein is Probable E3 ubiquitin-protein ligase XERICO (XERICO) of Arabidopsis thaliana (Mouse-ear cress).